The primary structure comprises 777 residues: Hepatocyte growth factor-regulated tyrosine kinase substrate (777 aa).

The VHS domain maps to 15–143; the sequence is ATSQLLLETD…IMKVEGHVFP (129 aa). The segment at 160–220 adopts an FYVE-type zinc-finger fold; that stretch reads WVDAEECHRC…VCEPCYEQLN (61 aa). 6 residues coordinate Zn(2+): Cys166, Cys169, Cys182, Cys185, Cys190, and Cys193. Lys207 carries the N6-acetyllysine modification. Zn(2+) is bound by residues Cys212 and Cys215. Tyr216 bears the Phosphotyrosine mark. The disordered stretch occupies residues 223-319; sequence AEGKATSTTE…SPVNSSAPLA (97 aa). Residues 225–543 form an interaction with SNX1 region; that stretch reads GKATSTTELP…QRLQEQEKER (319 aa). The UIM domain occupies 258-277; the sequence is QEEEELQLALALSQSEAEEK. Low complexity predominate over residues 290–311; it reads PKAEPMPSASSAPPASSLYSSP. Tyr308, Tyr329, and Tyr334 each carry phosphotyrosine. The segment at 338-407 is disordered; it reads KQEEARKSPT…NGESEESHEQ (70 aa). The interaction with SNAP25 and TRAK2 stretch occupies residues 445–543; it reads SINGMHPQLL…QRLQEQEKER (99 aa). The interval 454 to 572 is interaction with STAM; that stretch reads LELLNQLDER…FPLPYAQLQA (119 aa). Positions 480-777 are interaction with NF2; the sequence is ARGALSALRE…GSEAQLISFD (298 aa). Lys551 carries the N6-succinyllysine modification. Positions 718–777 are disordered; sequence LPSQDASLPPQQPYIAGQQPMYQQMAPSGGPPQQQPPVAQQPQAQGPPAQGSEAQLISFD. Over residues 753 to 768 the composition is skewed to low complexity; the sequence is PPVAQQPQAQGPPAQG.

As to quaternary structure, component of the ESCRT-0 complex composed of STAM or STAM2 and HGS. Part of a complex at least composed of HSG, STAM2 (or probably STAM) and EPS15. Interacts with STAM. Interacts with STAM2. Interacts with EPS15; the interaction is direct, calcium-dependent and inhibited by SNAP25. Identified in a complex with STAM and LITAF. Found in a complex with STAM and E3 ligase ITCH and DTX3L. Interacts with E3 ligase DTX3L; the interaction brings together STAM and HSG, promotes their recruitment to early endosomes and decreases STAM and HGS ubiquitination by ITCH. Interacts with NF2; the interaction is direct. Interacts with ubiquitin; the interaction is direct. Interacts with VPS37C. Interacts with SMAD1, SMAD2 and SMAD3. Interacts with TSG101; the interaction mediates the association with the ESCRT-I complex. Interacts with SNAP25; the interaction is direct and decreases with addition of increasing concentrations of free calcium. Interacts with SNX1; the interaction is direct. Component of a 550 kDa membrane complex at least composed of HGS and SNX1 but excluding EGFR. Interacts with TRAK1. Interacts with TRAK2. Component of the CART complex, at least composed of ACTN4, HGS/HRS, MYO5B and TRIM3. Interacts (via UIM domain) with UBQLN1 (via ubiquitin-like domain). Interacts with ARRDC3. Identified in a complex containing at least ARRDC4, AVPR2 and HGS. Interacts with LAPTM4B; promotes HGS ubiquitination. In terms of processing, phosphorylated on Tyr-334. A minor site of phosphorylation on Tyr-329 is detected. Phosphorylation occurs in response to EGF, IL-2, GM-CSF and HGF. Ubiquitinated. Ubiquitinated by ITCH. As to expression, ubiquitous expression in adult and fetal tissues with higher expression in testis and peripheral blood leukocytes.

It is found in the cytoplasm. The protein resides in the early endosome membrane. Its subcellular location is the endosome. It localises to the multivesicular body membrane. In terms of biological role, involved in intracellular signal transduction mediated by cytokines and growth factors. When associated with STAM, it suppresses DNA signaling upon stimulation by IL-2 and GM-CSF. Could be a direct effector of PI3-kinase in vesicular pathway via early endosomes and may regulate trafficking to early and late endosomes by recruiting clathrin. May concentrate ubiquitinated receptors within clathrin-coated regions. Involved in down-regulation of receptor tyrosine kinase via multivesicular body (MVBs) when complexed with STAM (ESCRT-0 complex). The ESCRT-0 complex binds ubiquitin and acts as a sorting machinery that recognizes ubiquitinated receptors and transfers them to further sequential lysosomal sorting/trafficking processes. May contribute to the efficient recruitment of SMADs to the activin receptor complex. Involved in receptor recycling via its association with the CART complex, a multiprotein complex required for efficient transferrin receptor recycling but not for EGFR degradation. The sequence is that of Hepatocyte growth factor-regulated tyrosine kinase substrate (HGS) from Homo sapiens (Human).